The chain runs to 331 residues: Smad-related protein daf-14 (331 aa).

The MH2 domain occupies 134-331 (WCTIFYYELT…NERPEIGSRS (198 aa)). Positions 168–187 (ECRMSLTSQPSSRNSKSSQI) are disordered. The segment covering 175 to 185 (SQPSSRNSKSS) has biased composition (low complexity).

Interacts with R-SMAD daf-8 and co-SMAD daf-3. Interacts with daf-3 in a daf-8 dependent manner.

In terms of biological role, probably an atypical receptor-regulated SMAD (R-SMAD) that is an intracellular signal transducer and transcriptional modulator activated by TGF-beta-like daf-7 signaling. Plays a role in TGF-beta-like daf-7 signaling in regulating entry into a developmentally arrested larval state known as dauer, in response to harsh environmental conditions; partially redundant with R-SMAD daf-8. This is Smad-related protein daf-14 from Caenorhabditis elegans.